The following is a 104-amino-acid chain: Large ribosomal subunit protein uL24 (104 aa).

This sequence belongs to the universal ribosomal protein uL24 family. As to quaternary structure, part of the 50S ribosomal subunit.

Functionally, one of two assembly initiator proteins, it binds directly to the 5'-end of the 23S rRNA, where it nucleates assembly of the 50S subunit. One of the proteins that surrounds the polypeptide exit tunnel on the outside of the subunit. In Psychromonas ingrahamii (strain DSM 17664 / CCUG 51855 / 37), this protein is Large ribosomal subunit protein uL24.